Here is a 127-residue protein sequence, read N- to C-terminus: Large ribosomal subunit protein bL12 (127 aa).

Residues 98–127 (PKPIKEGAPKAEAESLKSKLEEAGAEVELK) are disordered.

It belongs to the bacterial ribosomal protein bL12 family. Homodimer. Part of the ribosomal stalk of the 50S ribosomal subunit. Forms a multimeric L10(L12)X complex, where L10 forms an elongated spine to which 2 to 4 L12 dimers bind in a sequential fashion. Binds GTP-bound translation factors.

Its function is as follows. Forms part of the ribosomal stalk which helps the ribosome interact with GTP-bound translation factors. Is thus essential for accurate translation. This chain is Large ribosomal subunit protein bL12, found in Amoebophilus asiaticus (strain 5a2).